Here is a 393-residue protein sequence, read N- to C-terminus: MLPAVKTVEAEEEYAEDCPELVPIETKNQEEENLDFITKIPVTIVTGYLGAGKTTLLNYILTEQHNRKIAVILNEFGEGSAVEKSLAVSQGGELYEEWLELRNGCLCCSVKDSGLRAIENLMQKKGKFDYILLETTGLADPGAVASMFWVDAELGSDIYLDGIITVVDSKYGLKHLTEEKPDGLVNEATRQVALADMILINKTDLVSEEELNNLRTTIRSINGLGKVLETQRSRVHLSNILDLHAYDILSGISLQKKLQHVSTAPHLDQSIVTVTFEVPGSAKEECLNVFIQNLLWEKNVKNKDGHCMEVIRLKGLVSIKDKPQQMIVQGIHELYDLEESLVNWKDDAERACQLVFIGRNLDKDVLQQLFLTAVAEAEEQRTAPGRDGVCPSH.

The short motif at 16–23 is the psi-PxLVp motif element; that stretch reads EDCPELVP. A GTP-binding site is contributed by 47-54; that stretch reads GYLGAGKT. Cys105, Cys107, and Cys108 together coordinate Zn(2+). Residues 105–108 carry the CXCC motif motif; sequence CLCC. GTP is bound by residues 108-112 and 201-204; these read CSVKD and NKTD. A CobW C-terminal domain is found at 271 to 374; the sequence is IVTVTFEVPG…VLQQLFLTAV (104 aa).

Belongs to the SIMIBI class G3E GTPase family. ZNG1 subfamily. As to expression, present at high level in the nuclei of the ureteric bud cells in the developing kidneys.

It localises to the nucleus. The enzyme catalyses GTP + H2O = GDP + phosphate + H(+). Zinc chaperone that directly transfers zinc cofactor to target metalloproteins, thereby activating them. Catalyzes zinc insertion into the active site of methionine aminopeptidase METAP1, which function to cleave the initiator methionine from polypeptides during or after protein translation. Mechanistically, the N-terminal psi-PxLVp motif binds to the C6H2-type zinc finger of inactive form of METAP1. After formation of the docked complex, zinc is transferred from the CXCC motif in the GTPase domain of ZNG1 to the zinc binding site in the peptidase domain of METAP1 in a process requiring GTP hydrolysis. GTP/GDP exchange is required for release of active METAP1. The chain is Zinc-regulated GTPase metalloprotein activator 1 (Zng1) from Mus musculus (Mouse).